Reading from the N-terminus, the 179-residue chain is Probable chorismate pyruvate-lyase (179 aa).

Residues arginine 82, leucine 120, and glutamate 165 each contribute to the substrate site.

The protein belongs to the UbiC family.

The protein localises to the cytoplasm. The catalysed reaction is chorismate = 4-hydroxybenzoate + pyruvate. It functions in the pathway cofactor biosynthesis; ubiquinone biosynthesis. Functionally, removes the pyruvyl group from chorismate, with concomitant aromatization of the ring, to provide 4-hydroxybenzoate (4HB) for the ubiquinone pathway. In Vibrio vulnificus (strain YJ016), this protein is Probable chorismate pyruvate-lyase.